The primary structure comprises 426 residues: tRNA (guanine(37)-N(1))-methyltransferase (426 aa).

S-adenosyl-L-methionine contacts are provided by residues His203, Asp242–Leu243, Asp269–Ala270, and Asn292. A disordered region spans residues Arg374–His426. The segment covering Asn396–Asn407 has biased composition (low complexity).

This sequence belongs to the class I-like SAM-binding methyltransferase superfamily. TRM5/TYW2 family. In terms of assembly, monomer.

It is found in the mitochondrion matrix. The protein localises to the nucleus. It localises to the cytoplasm. The catalysed reaction is guanosine(37) in tRNA + S-adenosyl-L-methionine = N(1)-methylguanosine(37) in tRNA + S-adenosyl-L-homocysteine + H(+). Specifically methylates the N1 position of guanosine-37 in various cytoplasmic and mitochondrial tRNAs. Methylation is not dependent on the nature of the nucleoside 5' of the target nucleoside. This is the first step in the biosynthesis of wybutosine (yW), a modified base adjacent to the anticodon of tRNAs and required for accurate decoding. This is tRNA (guanine(37)-N(1))-methyltransferase (trmt5) from Heterostelium pallidum (strain ATCC 26659 / Pp 5 / PN500) (Cellular slime mold).